Here is a 361-residue protein sequence, read N- to C-terminus: MATLEAIKYDGEKLLVLDQIKLPLETHYDEVLSIQDGWDAIREMRVRGAPAIAIVAALTIAVVMKRSTFATAAELAAFVRTSLEHLRTSRPTAVNLFEMAGRLEALLQEQPADCTEAALRQAVLSYIEGMMQADIADNQAIGKFGAEAILKDLSADVKVKVLTHCNTGSLATARYGTALGVIRSLHEQQRLEHAFCTETRPYNQGARLTAYELVTEGIPGTLVADSMVSLLMKQKGISAVVVGADRVVANGDTANKIGTYQIAIAAKHHGVPFFVAAPLTSVDLKLSHGSEITIEERPGKELTHIFGQQLAAPGIGTWNPAFDVTPADLITGIITERGVAYKAEGQQEFDMASFAASVGRA.

The active-site Proton donor is the D245.

Belongs to the eIF-2B alpha/beta/delta subunits family. MtnA subfamily.

It localises to the cytoplasm. The protein resides in the nucleus. It catalyses the reaction 5-(methylsulfanyl)-alpha-D-ribose 1-phosphate = 5-(methylsulfanyl)-D-ribulose 1-phosphate. The protein operates within amino-acid biosynthesis; L-methionine biosynthesis via salvage pathway; L-methionine from S-methyl-5-thio-alpha-D-ribose 1-phosphate: step 1/6. In terms of biological role, catalyzes the interconversion of methylthioribose-1-phosphate (MTR-1-P) into methylthioribulose-1-phosphate (MTRu-1-P). This is Methylthioribose-1-phosphate isomerase from Monosiga brevicollis (Choanoflagellate).